We begin with the raw amino-acid sequence, 559 residues long: YTH domain-containing family protein 1 (559 aa).

A disordered region spans residues 1–49 (MSATSVDPQRTKGQDNKVQNGSLHQKDAVHDNDFEPYLSGQSNPSNSYP). N-acetylserine is present on Ser2. Positions 24-33 (HQKDAVHDND) are enriched in basic and acidic residues. Phosphoserine is present on Ser182. Positions 239–365 (SKPAKPQPKM…PTSAPSVESH (127 aa)) are disordered. Composition is skewed to low complexity over residues 279–305 (PAPK…AQPL) and 314–326 (QPQY…PLQP). A compositionally biased stretch (polar residues) spans 343 to 361 (GANSDSNSVGNAQPTSAPS). A YTH domain is found at 389-523 (GRVFIIKSYS…EKAKQVLKII (135 aa)). RNA contacts are provided by residues 395–397 (KSY), Asp401, 411–412 (WC), Asn441, Trp465, and Trp470.

It belongs to the YTHDF family. YTHDF1 subfamily. As to quaternary structure, interacts with CNOT1; promoting recruitment of the CCR4-NOT complex. Interacts with ribosomes. Interacts with eIF3 (EIF3A or EIF3B). Interacts with YTHDF3. Ubiquitinated by the CUL7-FBXW8 E3 ligase complex leading to degradation. Deubiquitinated and stabilized by USP5 by removing 'Lys-11'-linked polyubiquitination. In terms of tissue distribution, in brain, preferentially expressed in the hippocampus.

The protein localises to the cytoplasm. The protein resides in the P-body. Its subcellular location is the stress granule. In terms of biological role, specifically recognizes and binds N6-methyladenosine (m6A)-containing mRNAs, and regulates their stability. M6A is a modification present at internal sites of mRNAs and some non-coding RNAs and plays a role in mRNA stability and processing. Acts as a regulator of mRNA stability by promoting degradation of m6A-containing mRNAs via interaction with the CCR4-NOT complex. The YTHDF paralogs (YTHDF1, YTHDF2 and YTHDF3) share m6A-containing mRNAs targets and act redundantly to mediate mRNA degradation and cellular differentiation. Required to facilitate learning and memory formation in the hippocampus by binding to m6A-containing neuronal mRNAs. Acts as a regulator of axon guidance by binding to m6A-containing ROBO3 transcripts. Acts as a negative regulator of antigen cross-presentation in myeloid dendritic cells. In the context of tumorigenesis, negative regulation of antigen cross-presentation limits the anti-tumor response by reducing efficiency of tumor-antigen cross-presentation. Promotes formation of phase-separated membraneless compartments, such as P-bodies or stress granules, by undergoing liquid-liquid phase separation upon binding to mRNAs containing multiple m6A-modified residues: polymethylated mRNAs act as a multivalent scaffold for the binding of YTHDF proteins, juxtaposing their disordered regions and thereby leading to phase separation. The resulting mRNA-YTHDF complexes then partition into different endogenous phase-separated membraneless compartments, such as P-bodies, stress granules or neuronal RNA granules. The chain is YTH domain-containing family protein 1 from Mus musculus (Mouse).